A 580-amino-acid chain; its full sequence is Type 3 secretion system translocon protein SctE (580 aa).

2 ipgC chaperone binding domain regions span residues 15–45 (KILT…IADL) and 51–72 (INTT…APKS). A mediates interaction with human MAD2L2 region spans residues 61-70 (NILIPELKAP). Residues 104–224 (AWKSQQQARQ…MQLEKEIDSF (121 aa)) adopt a coiled-coil conformation. A run of 2 helical transmembrane segments spans residues 313-333 (ILGA…GGAS) and 399-419 (IGSI…VVLV).

The protein belongs to the SctE/SipB/YopB family. As to quaternary structure, the core secretion machinery of the T3SS is composed of approximately 20 different proteins, including cytoplasmic components, a base, an export apparatus and a needle. This subunit is involved in the formation of a pore, called the translocon, in host membrane. Interacts with IpaC/SctB. Interacts with the needle tip protein IpaD/SctA. Interacts with the molecular chaperone IpgC, which prevents premature association with IpaC/SctB within the cytoplasm of Shigella cells and protects IpaB/SctE from proteolysis. Interacts with the host protein ICE in the cytoplasm of infected macrophages. Interacts with human MAD2L2 in the G2/M phase of the cell cycle.

Its subcellular location is the secreted. The protein localises to the host membrane. It is found in the host cell. The protein resides in the host nucleus. With respect to regulation, interaction with the membrane is affected by the pH. IpaB/SctE is more efficient in destabilizing the membrane at pH 5.0 than at neutral pH. Its function is as follows. Component of the type III secretion system (T3SS), also called injectisome, which is used to inject bacterial effector proteins into eukaryotic host cells. IpaB/SctE and IpaC/SctB are inserted into the host membrane where they form a pore and allow the translocation of effector proteins into the cytosol of target cells. Interaction with IpaD/SctA at needle tips leads to the formation of the MxiH/SctF-IpaD/SctA-IpaB/SctE ternary complex, which is essential for host cell sensing. Interaction of IpaB/SctE with host membrane lipids promotes recruitment of IpaC/SctB at the needle tip concomitant with translocon insertion into the host membrane and type III secretion induction. In terms of biological role, required for efficient dissemination. Necessary for lysis of the two cellular membranes that surround bacteria in protrusions during cell-to-cell spread. Is sufficient to induce macrophage apoptosis through activation of the interleukin-1 beta converting enzyme (ICE) in infected macrophages. In epithelial cells, causes cell-cycle arrest by targeting host MAD2L2, an anaphase-promoting complex/cyclosome (APC) inhibitor. In Shigella flexneri, this protein is Type 3 secretion system translocon protein SctE.